The chain runs to 275 residues: Uroplakin-3b (275 aa).

Residues 1–26 (MVRTRWQPPLRALLLLVLVWLPQSLS) form the signal peptide. The Lumenal segment spans residues 27 to 196 (LDLIAYVPQI…DTWPGRRSGC (170 aa)). N-linked (GlcNAc...) asparagine glycosylation occurs at N77. Residues 197 to 217 (MIVITSILSALAGLLLLAFLA) traverse the membrane as a helical segment. Over 218 to 275 (ASTTRFSSLWWPEEAPEQLRIGSFMGKRYMTHHIPPSEAATLPVGCEPGLDPLPSLSP) the chain is Cytoplasmic.

Belongs to the uroplakin-3 family. In terms of assembly, heterodimer with uroplakin-1B (UPK1B). Expression is urothelium-specific.

It is found in the cell membrane. In terms of biological role, component of the asymmetric unit membrane (AUM); a highly specialized biomembrane elaborated by terminally differentiated urothelial cells. May play an important role in AUM-cytoskeleton interaction in terminally differentiated urothelial cells. It also contributes to the formation of urothelial glycocalyx which may play an important role in preventing bacterial adherence. The chain is Uroplakin-3b (Upk3b) from Mus musculus (Mouse).